The following is an 83-amino-acid chain: Alpha-neurotoxin NTX-1 (83 aa).

The N-terminal stretch at 1–21 (MKTLLLTLLVVTIVCLDLGYT) is a signal peptide. Disulfide bonds link Cys-24–Cys-45, Cys-38–Cys-62, Cys-64–Cys-75, and Cys-76–Cys-81.

It belongs to the three-finger toxin family. Short-chain subfamily. Type I alpha-neurotoxin sub-subfamily. In terms of tissue distribution, expressed by the venom gland.

The protein localises to the secreted. Functionally, binds to muscle nicotinic acetylcholine receptor (nAChR) and inhibit acetylcholine from binding to the receptor, thereby impairing neuromuscular transmission. The polypeptide is Alpha-neurotoxin NTX-1 (Naja sputatrix (Malayan spitting cobra)).